Reading from the N-terminus, the 342-residue chain is Holliday junction branch migration complex subunit RuvB (342 aa).

The segment at Met1–Tyr179 is large ATPase domain (RuvB-L). Residues Ile18, Arg19, Gly60, Lys63, Thr64, Thr65, Glu126–Phe128, Arg169, Tyr179, and Arg216 each bind ATP. Thr64 lines the Mg(2+) pocket. The segment at Asn180–Glu250 is small ATPAse domain (RuvB-S). A head domain (RuvB-H) region spans residues His253–Glu342. Residues Arg289, Arg308, and Arg313 each contribute to the DNA site.

Belongs to the RuvB family. Homohexamer. Forms an RuvA(8)-RuvB(12)-Holliday junction (HJ) complex. HJ DNA is sandwiched between 2 RuvA tetramers; dsDNA enters through RuvA and exits via RuvB. An RuvB hexamer assembles on each DNA strand where it exits the tetramer. Each RuvB hexamer is contacted by two RuvA subunits (via domain III) on 2 adjacent RuvB subunits; this complex drives branch migration. In the full resolvosome a probable DNA-RuvA(4)-RuvB(12)-RuvC(2) complex forms which resolves the HJ.

Its subcellular location is the cytoplasm. It carries out the reaction ATP + H2O = ADP + phosphate + H(+). In terms of biological role, the RuvA-RuvB-RuvC complex processes Holliday junction (HJ) DNA during genetic recombination and DNA repair, while the RuvA-RuvB complex plays an important role in the rescue of blocked DNA replication forks via replication fork reversal (RFR). RuvA specifically binds to HJ cruciform DNA, conferring on it an open structure. The RuvB hexamer acts as an ATP-dependent pump, pulling dsDNA into and through the RuvAB complex. RuvB forms 2 homohexamers on either side of HJ DNA bound by 1 or 2 RuvA tetramers; 4 subunits per hexamer contact DNA at a time. Coordinated motions by a converter formed by DNA-disengaged RuvB subunits stimulates ATP hydrolysis and nucleotide exchange. Immobilization of the converter enables RuvB to convert the ATP-contained energy into a lever motion, pulling 2 nucleotides of DNA out of the RuvA tetramer per ATP hydrolyzed, thus driving DNA branch migration. The RuvB motors rotate together with the DNA substrate, which together with the progressing nucleotide cycle form the mechanistic basis for DNA recombination by continuous HJ branch migration. Branch migration allows RuvC to scan DNA until it finds its consensus sequence, where it cleaves and resolves cruciform DNA. The protein is Holliday junction branch migration complex subunit RuvB of Rickettsia felis (strain ATCC VR-1525 / URRWXCal2) (Rickettsia azadi).